A 314-amino-acid chain; its full sequence is tRNA uridine(34) hydroxylase (314 aa).

Positions 140–234 constitute a Rhodanese domain; sequence ARDDVILIDT…YLEETPPDES (95 aa). Cys194 (cysteine persulfide intermediate) is an active-site residue.

Belongs to the TrhO family.

It catalyses the reaction uridine(34) in tRNA + AH2 + O2 = 5-hydroxyuridine(34) in tRNA + A + H2O. Catalyzes oxygen-dependent 5-hydroxyuridine (ho5U) modification at position 34 in tRNAs. This chain is tRNA uridine(34) hydroxylase, found in Acinetobacter baumannii (strain AYE).